The following is a 240-amino-acid chain: Probable septum site-determining protein MinC (240 aa).

This sequence belongs to the MinC family. As to quaternary structure, interacts with MinD and FtsZ.

Cell division inhibitor that blocks the formation of polar Z ring septums. Rapidly oscillates between the poles of the cell to destabilize FtsZ filaments that have formed before they mature into polar Z rings. Prevents FtsZ polymerization. The sequence is that of Probable septum site-determining protein MinC from Acinetobacter baumannii (strain ACICU).